Reading from the N-terminus, the 508-residue chain is Anaerobic nitric oxide reductase transcription regulator NorR (508 aa).

Asp56 carries the 4-aspartylphosphate modification. Positions 186–415 (MIGQSPAMAR…LEHAIHRAAV (230 aa)) constitute a Sigma-54 factor interaction domain. ATP contacts are provided by residues 214–221 (GETGVGKE) and 277–286 (ADQGTLFLDE). The H-T-H motif DNA-binding region spans 483-502 (WAATARALELDSGNLHRLAK).

The protein operates within nitrogen metabolism; nitric oxide reduction. In terms of biological role, required for the expression of anaerobic nitric oxide (NO) reductase, acts as a transcriptional activator for at least the norVW operon. Activation also requires sigma-54. In Aeromonas hydrophila subsp. hydrophila (strain ATCC 7966 / DSM 30187 / BCRC 13018 / CCUG 14551 / JCM 1027 / KCTC 2358 / NCIMB 9240 / NCTC 8049), this protein is Anaerobic nitric oxide reductase transcription regulator NorR.